The sequence spans 259 residues: Dihydroorotate dehydrogenase B (NAD(+)), electron transfer subunit (259 aa).

An FAD-binding FR-type domain is found at 2–102; the sequence is MQKQNMIVVN…LGPLGHGFPV (101 aa). FAD-binding positions include 53 to 56, 70 to 72, and 77 to 78; these read RPIS, LYR, and GT. 4 residues coordinate [2Fe-2S] cluster: cysteine 221, cysteine 226, cysteine 229, and cysteine 246.

Belongs to the PyrK family. Heterotetramer of 2 PyrK and 2 PyrD type B subunits. Requires [2Fe-2S] cluster as cofactor. FAD serves as cofactor.

The protein operates within pyrimidine metabolism; UMP biosynthesis via de novo pathway; orotate from (S)-dihydroorotate (NAD(+) route): step 1/1. Its function is as follows. Responsible for channeling the electrons from the oxidation of dihydroorotate from the FMN redox center in the PyrD type B subunit to the ultimate electron acceptor NAD(+). This Bacillus cereus (strain ATCC 14579 / DSM 31 / CCUG 7414 / JCM 2152 / NBRC 15305 / NCIMB 9373 / NCTC 2599 / NRRL B-3711) protein is Dihydroorotate dehydrogenase B (NAD(+)), electron transfer subunit.